The primary structure comprises 306 residues: uncharacterized protein (306 aa).

Residues 13 to 39 (NMLNEIAANNNLLNNKNNQTNQLNNNQ) are a coiled coil. Disordered stretches follow at residues 44–76 (YNNQ…HQQN), 103–204 (DSKE…QSGQ), and 216–249 (QKQL…TMQH). Residues 119 to 201 (HQQPIQNNPS…QFAQPNQYNQ (83 aa)) show a composition bias toward low complexity. The span at 218 to 235 (QLDKNQPEKIPSKPEKNQ) shows a compositional bias: basic and acidic residues. Residues 279-299 (LFDYIIIPIALVLVFLFLVHP) traverse the membrane as a helical segment.

The protein resides in the membrane. This is an uncharacterized protein from Acanthamoeba polyphaga mimivirus (APMV).